Reading from the N-terminus, the 558-residue chain is Glutamine--tRNA ligase (558 aa).

The 'HIGH' region motif lies at 36 to 46 (PEPNGYLHIGH). ATP is bound by residues 37–39 (EPN) and 43–49 (HIGHAKS). Residues D69 and Y214 each coordinate L-glutamine. Residues T233, 263-264 (RL), and 271-273 (LSK) contribute to the ATP site. The short motif at 270–274 (LLSKR) is the 'KMSKS' region element.

Belongs to the class-I aminoacyl-tRNA synthetase family. As to quaternary structure, monomer.

The protein resides in the cytoplasm. The enzyme catalyses tRNA(Gln) + L-glutamine + ATP = L-glutaminyl-tRNA(Gln) + AMP + diphosphate. The polypeptide is Glutamine--tRNA ligase (Bradyrhizobium diazoefficiens (strain JCM 10833 / BCRC 13528 / IAM 13628 / NBRC 14792 / USDA 110)).